The primary structure comprises 262 residues: MSTHANHPFHLVDYSPWPLTGAIGAMTTVSGLVQWFHQYTMTLFILGNVITILTMYQWWRDISREGTFQGLHTFPVTIGLRWGMILFIVSEVFFFISFFWAFFHSSLSPTIELGMTWPPVGIAAFNPFQIPLLNTAILLASGVTVTWAHHALMEGNHSQATQGLFFTIVLGVYFTILQAYEYIEAPFTIADAVYGSTFYMATGFHGLHVLIGTTFLLICFLRHINYHFSKNHHFGFEAAAWYWHFVDVVWLFLYITIYWWGS.

6 helical membrane-spanning segments follow: residues 39–59 (YTMTLFILGNVITILTMYQWW), 83–103 (GMILFIVSEVFFFISFFWAFF), 120–140 (VGIAAFNPFQIPLLNTAILLA), 163–183 (GLFFTIVLGVYFTILQAYEYI), 201–221 (ATGFHGLHVLIGTTFLLICFL), and 240–260 (AWYWHFVDVVWLFLYITIYWW).

Belongs to the cytochrome c oxidase subunit 3 family. In terms of assembly, component of the cytochrome c oxidase (complex IV, CIV), a multisubunit enzyme composed of a catalytic core of 3 subunits and several supernumerary subunits. The complex exists as a monomer or a dimer and forms supercomplexes (SCs) in the inner mitochondrial membrane with ubiquinol-cytochrome c oxidoreductase (cytochrome b-c1 complex, complex III, CIII).

The protein localises to the mitochondrion inner membrane. It catalyses the reaction 4 Fe(II)-[cytochrome c] + O2 + 8 H(+)(in) = 4 Fe(III)-[cytochrome c] + 2 H2O + 4 H(+)(out). Functionally, component of the cytochrome c oxidase, the last enzyme in the mitochondrial electron transport chain which drives oxidative phosphorylation. The respiratory chain contains 3 multisubunit complexes succinate dehydrogenase (complex II, CII), ubiquinol-cytochrome c oxidoreductase (cytochrome b-c1 complex, complex III, CIII) and cytochrome c oxidase (complex IV, CIV), that cooperate to transfer electrons derived from NADH and succinate to molecular oxygen, creating an electrochemical gradient over the inner membrane that drives transmembrane transport and the ATP synthase. Cytochrome c oxidase is the component of the respiratory chain that catalyzes the reduction of oxygen to water. Electrons originating from reduced cytochrome c in the intermembrane space (IMS) are transferred via the dinuclear copper A center (CU(A)) of subunit 2 and heme A of subunit 1 to the active site in subunit 1, a binuclear center (BNC) formed by heme A3 and copper B (CU(B)). The BNC reduces molecular oxygen to 2 water molecules using 4 electrons from cytochrome c in the IMS and 4 protons from the mitochondrial matrix. This Anopheles gambiae (African malaria mosquito) protein is Cytochrome c oxidase subunit 3 (COIII).